The sequence spans 530 residues: Glucose-6-phosphate isomerase (530 aa).

Glu322 functions as the Proton donor in the catalytic mechanism. Residues His351 and Lys455 contribute to the active site.

It belongs to the GPI family.

The protein resides in the cytoplasm. The enzyme catalyses alpha-D-glucose 6-phosphate = beta-D-fructose 6-phosphate. Its pathway is carbohydrate biosynthesis; gluconeogenesis. It functions in the pathway carbohydrate degradation; glycolysis; D-glyceraldehyde 3-phosphate and glycerone phosphate from D-glucose: step 2/4. Functionally, catalyzes the reversible isomerization of glucose-6-phosphate to fructose-6-phosphate. This is Glucose-6-phosphate isomerase from Geobacter sp. (strain M21).